A 205-amino-acid chain; its full sequence is GTP-binding protein rho3 (205 aa).

Position 20 to 27 (20 to 27) interacts with GTP; it reads GDGAAGKT. The Effector region motif lies at 42-50; that stretch reads YEPTIFENY. GTP contacts are provided by residues 67–71 and 125–128; these read DTAGQ and LKCD. Cys202 is modified (cysteine methyl ester). Cys202 carries S-geranylgeranyl cysteine lipidation. The propeptide at 203–205 is removed in mature form; the sequence is IIA.

The protein belongs to the small GTPase superfamily. Rho family. Interacts with for3. Palmitoylated by the erf2-erf4 complex.

It localises to the cell membrane. Functionally, involved in controlling cell shape and septation. Regulates cell separation by modulating the function of the exocyst complex. Involved in post-Golgi vesicle transport. Involved in driving sexual development in a palmitoylation-dependent manner. The protein is GTP-binding protein rho3 (rho3) of Schizosaccharomyces pombe (strain 972 / ATCC 24843) (Fission yeast).